We begin with the raw amino-acid sequence, 481 residues long: Aspartyl/glutamyl-tRNA(Asn/Gln) amidotransferase subunit B (481 aa).

It belongs to the GatB/GatE family. GatB subfamily. In terms of assembly, heterotrimer of A, B and C subunits.

It catalyses the reaction L-glutamyl-tRNA(Gln) + L-glutamine + ATP + H2O = L-glutaminyl-tRNA(Gln) + L-glutamate + ADP + phosphate + H(+). The enzyme catalyses L-aspartyl-tRNA(Asn) + L-glutamine + ATP + H2O = L-asparaginyl-tRNA(Asn) + L-glutamate + ADP + phosphate + 2 H(+). Allows the formation of correctly charged Asn-tRNA(Asn) or Gln-tRNA(Gln) through the transamidation of misacylated Asp-tRNA(Asn) or Glu-tRNA(Gln) in organisms which lack either or both of asparaginyl-tRNA or glutaminyl-tRNA synthetases. The reaction takes place in the presence of glutamine and ATP through an activated phospho-Asp-tRNA(Asn) or phospho-Glu-tRNA(Gln). This is Aspartyl/glutamyl-tRNA(Asn/Gln) amidotransferase subunit B from Pseudomonas aeruginosa (strain LESB58).